An 89-amino-acid chain; its full sequence is Neuropeptide S (89 aa).

The first 23 residues, methionine 1–cysteine 23, serve as a signal peptide directing secretion. Positions tyrosine 24–arginine 69 are excised as a propeptide.

It localises to the secreted. May play an important anorexigenic role. Modulates arousal and anxiety as well as increases locomotor activity. Binds to its receptor NPSR1 with nanomolar affinity to increase intracellular calcium concentrations. The sequence is that of Neuropeptide S (Nps) from Mus musculus (Mouse).